The chain runs to 147 residues: UPF0179 protein MTH_609 (147 aa).

Belongs to the UPF0179 family.

The polypeptide is UPF0179 protein MTH_609 (Methanothermobacter thermautotrophicus (strain ATCC 29096 / DSM 1053 / JCM 10044 / NBRC 100330 / Delta H) (Methanobacterium thermoautotrophicum)).